A 31-amino-acid chain; its full sequence is Sarcolipin (31 aa).

Residues 1–7 (MERSTQE) are Cytoplasmic-facing. Residues 8 to 26 (LFINFTVVLITVLLMWLLV) traverse the membrane as a helical segment. The Lumenal portion of the chain corresponds to 27-31 (RSYQY).

The protein belongs to the sarcolipin family. Homooligomer. Can also form heterooligomers with other sarcoplasmic/endoplasmic reticulum calcium ATPase (SERCA) regulators ARLN, ERLN, PLN and STRIT1/DWORF. Monomer. Interacts with calcium ATPase ATP2A1/SERCA1. Interacts as a monomer with ATP2A2/SERCA2; the interaction decreases ATP2A2 Ca(2+) affinity. Interacts with VMP1; VMP1 competes with PLN and SLN to prevent them from forming an inhibitory complex with ATP2A2.

It is found in the sarcoplasmic reticulum membrane. The protein resides in the endoplasmic reticulum membrane. Functionally, reversibly inhibits the activity of ATP2A1/SERCA1 and ATP2A2/SERCA2 in sarcoplasmic reticulum by decreasing the apparent affinity of the ATPase for Ca(2+). Also inhibits the activity of ATP2A3/SERCA3. Modulates calcium re-uptake during muscle relaxation and plays an important role in calcium homeostasis in muscle. Required for muscle-based, non-shivering thermogenesis. This chain is Sarcolipin (Sln), found in Rattus norvegicus (Rat).